The sequence spans 193 residues: Large ribosomal subunit protein uL18 (193 aa).

The protein belongs to the universal ribosomal protein uL18 family. Part of the 50S ribosomal subunit. Contacts the 5S and 23S rRNAs.

In terms of biological role, this is one of the proteins that bind and probably mediate the attachment of the 5S RNA into the large ribosomal subunit, where it forms part of the central protuberance. The protein is Large ribosomal subunit protein uL18 of Methanococcus vannielii (strain ATCC 35089 / DSM 1224 / JCM 13029 / OCM 148 / SB).